The primary structure comprises 252 residues: Imidazole glycerol phosphate synthase subunit HisF (252 aa).

Residues D12 and D131 contribute to the active site.

This sequence belongs to the HisA/HisF family. Heterodimer of HisH and HisF.

The protein resides in the cytoplasm. The catalysed reaction is 5-[(5-phospho-1-deoxy-D-ribulos-1-ylimino)methylamino]-1-(5-phospho-beta-D-ribosyl)imidazole-4-carboxamide + L-glutamine = D-erythro-1-(imidazol-4-yl)glycerol 3-phosphate + 5-amino-1-(5-phospho-beta-D-ribosyl)imidazole-4-carboxamide + L-glutamate + H(+). The protein operates within amino-acid biosynthesis; L-histidine biosynthesis; L-histidine from 5-phospho-alpha-D-ribose 1-diphosphate: step 5/9. In terms of biological role, IGPS catalyzes the conversion of PRFAR and glutamine to IGP, AICAR and glutamate. The HisF subunit catalyzes the cyclization activity that produces IGP and AICAR from PRFAR using the ammonia provided by the HisH subunit. This Thermus thermophilus (strain ATCC BAA-163 / DSM 7039 / HB27) protein is Imidazole glycerol phosphate synthase subunit HisF.